Consider the following 209-residue polypeptide: Ras-related protein Rab-2-A (209 aa).

13–21 (GDTGVGKSC) contributes to the GTP binding site. The Effector region signature appears at 35 to 43 (HDLTIGVEF). Residues 61–65 (DTAGQ), 119–122 (NKCD), and 149–151 (SAK) contribute to the GTP site. 2 S-geranylgeranyl cysteine lipidation sites follow: Cys-207 and Cys-208.

The protein belongs to the small GTPase superfamily. Rab family.

It localises to the endoplasmic reticulum membrane. The protein localises to the golgi apparatus membrane. In terms of biological role, protein transport. Probably involved in vesicular traffic. In Zea mays (Maize), this protein is Ras-related protein Rab-2-A (RAB2A).